We begin with the raw amino-acid sequence, 147 residues long: Deoxyuridine 5'-triphosphate nucleotidohydrolase (147 aa).

Residues 67 to 69, asparagine 80, and 84 to 86 contribute to the substrate site; these read RSG and TID.

This sequence belongs to the dUTPase family. Requires Mg(2+) as cofactor.

It catalyses the reaction dUTP + H2O = dUMP + diphosphate + H(+). The protein operates within pyrimidine metabolism; dUMP biosynthesis; dUMP from dCTP (dUTP route): step 2/2. Functionally, this enzyme is involved in nucleotide metabolism: it produces dUMP, the immediate precursor of thymidine nucleotides and it decreases the intracellular concentration of dUTP so that uracil cannot be incorporated into DNA. The protein is Deoxyuridine 5'-triphosphate nucleotidohydrolase of Syntrophotalea carbinolica (strain DSM 2380 / NBRC 103641 / GraBd1) (Pelobacter carbinolicus).